The following is a 148-amino-acid chain: Transcriptional regulator MraZ (148 aa).

SpoVT-AbrB domains follow at residues 5–53 (ETAI…VEKE) and 82–125 (SALL…SEQA).

The protein belongs to the MraZ family. As to quaternary structure, forms oligomers.

It is found in the cytoplasm. The protein resides in the nucleoid. The chain is Transcriptional regulator MraZ from Xylella fastidiosa (strain 9a5c).